The sequence spans 2227 residues: Genome polyprotein (2227 aa).

Short sequence motifs ((L)YPX(n)L motif) lie at residues 167-171 and 200-205; these read YPHGL and YPVWEL. Positions 766–836 are involved in P1-2A pentamerization; sequence MMSRIAAGDL…PRKMKGLFSQ (71 aa). A helical transmembrane segment spans residues 1011 to 1031; sequence TVEIINTVLCFVKSGILLYVI. Residues 1043 to 1070 form a membrane-penetrating ability region; it reads IGLLRVMNYADIGCSVISCGKVFSKMLE. The stretch at 1127–1152 forms a coiled coil; the sequence is KKKDILNILKDNQQKIEKAIEEADNF. The 163-residue stretch at 1204-1366 folds into the SF3 helicase domain; the sequence is HQKLKNLGSI…SFFKNPHNDM (163 aa). An ATP-binding site is contributed by 1230–1237; sequence GKRGGGKS. A helical membrane pass occupies residues 1462-1482; the sequence is WVAVGAAVGILGVLVGGWFVY. The residue at position 1499 (Tyr1499) is an O-(5'-phospho-RNA)-tyrosine. One can recognise a Peptidase C3 domain in the interval 1514-1728; that stretch reads DPVESQSTLE…VAKLVTQEMF (215 aa). Active-site for protease 3C activity residues include His1563, Asp1603, and Cys1691. The RdRp catalytic domain maps to 1976–2097; the sequence is DVGLDLDFSA…VFSRDVQIDN (122 aa).

It belongs to the picornaviridae polyprotein family. Homodimer. Homomultimer; probably interacts with membranes in a multimeric form. Seems to assemble into amyloid-like fibers. As to quaternary structure, homodimer. Monomer. Interacts with protein 3CD. In terms of assembly, interacts with host ACBD3. Interacts with protein 3AB. As to quaternary structure, interacts with human MAVS. In terms of assembly, homodimer; disulfide-linked. Homopentamer. Homooligomer. As to quaternary structure, interacts with capsid protein VP2. Interacts with capsid protein VP3. In terms of assembly, interacts with capsid protein VP1. Interacts with capsid protein VP3. Interacts with capsid protein VP1. Interacts with capsid protein VP2. In terms of processing, specific enzymatic cleavages by viral protease in vivo yield a variety of precursors and mature proteins. Polyprotein processing intermediates are produced, such as P1-2A which is a functional precursor of the structural proteins, VP0 which is a VP4-VP2 precursor, VP1-2A precursor, 3ABC precursor which is a stable and catalytically active precursor of 3A, 3B and 3C proteins, 3AB and 3CD precursors. The assembly signal 2A is removed from VP1-2A by a host protease, possibly host Cathepsin L. This cleavage occurs over a region of 3 amino-acids probably generating VP1 proteins with heterogeneous C-termini. During virion maturation, immature virions are rendered infectious following cleavage of VP0 into VP4 and VP2. This maturation seems to be an autocatalytic event triggered by the presence of RNA in the capsid and is followed by a conformational change of the particle. Post-translationally, the assembly signal 2A is removed from VP1-2A by a host protease, possibly host Cathepsin L in naked virions. This cleavage does not occur in enveloped virions. This cleavage occurs over a region of 3 amino-acids probably generating VP1 proteins with heterogeneous C-termini. In terms of processing, VPg is uridylylated prior to priming replication into VPg-pUpU. Unlike other picornaviruses, does not seem to be myristoylated.

It localises to the virion. The protein localises to the host endosome. It is found in the host multivesicular body. Its subcellular location is the host membrane. The protein resides in the host mitochondrion outer membrane. It localises to the host cytoplasm. The protein localises to the host cytoplasmic vesicle membrane. The enzyme catalyses RNA(n) + a ribonucleoside 5'-triphosphate = RNA(n+1) + diphosphate. The catalysed reaction is a ribonucleoside 5'-triphosphate + H2O = a ribonucleoside 5'-diphosphate + phosphate + H(+). It carries out the reaction Selective cleavage of Gln-|-Gly bond in the poliovirus polyprotein. In other picornavirus reactions Glu may be substituted for Gln, and Ser or Thr for Gly.. In terms of biological role, capsid proteins VP1, VP2, and VP3 form a closed capsid enclosing the viral positive strand RNA genome. All these proteins contain a beta-sheet structure called beta-barrel jelly roll. Together they form an icosahedral capsid (T=3) composed of 60 copies of each VP1, VP2, and VP3, with a diameter of approximately 300 Angstroms. VP1 is situated at the 12 fivefold axes, whereas VP2 and VP3 are located at the quasi-sixfold axes. The naked capsid interacts with the host receptor HAVCR1 to provide virion attachment to and probably entry into the target cell. VP0 precursor is a component of the immature procapsids. Its function is as follows. Plays a role in the assembly of the 12 pentamers into an icosahedral structure. Has not been detected in mature virions, supposedly owing to its small size. Functionally, precursor component of immature procapsids that corresponds to an extended form of the structural protein VP1. After maturation, possibly by the host Cathepsin L, the assembly signal 2A is cleaved to give rise to the mature VP1 protein. In terms of biological role, functions as a viroporin. Affects membrane integrity and causes an increase in membrane permeability. Involved in host intracellular membrane rearrangements probably to give rise to the viral factories. Does not disrupt calcium homeostasis or glycoprotein trafficking. Antagonizes the innate immune response of the host by suppressing IFN-beta synthesis, which it achieves by interfering with the RIG-I/IFIH1 pathway. Affects membrane integrity and causes an increase in membrane permeability. Its function is as follows. Associates with and induces structural rearrangements of intracellular membranes. Displays RNA-binding activity. Functionally, the precursor 3ABC is targeted to the mitochondrial membrane where protease 3C activity cleaves and inhibits the host antiviral protein MAVS, thereby disrupting activation of IRF3 through the IFIH1/MDA5 pathway. In vivo, the protease activity of 3ABC precursor is more efficient in cleaving the 2BC precursor than that of protein 3C. The 3ABC precursor may therefore play a role in the proteolytic processing of the polyprotein. Possible viroporin. In terms of biological role, interacts with the 3CD precursor and with RNA structures found at both the 5'- and 3'-termini of the viral genome. Since the 3AB precursor contains the hydrophobic domain 3A, it probably anchors the whole viral replicase complex to intracellular membranes on which viral RNA synthesis occurs. May serve as membrane anchor to the 3AB and 3ABC precursors via its hydrophobic domain. May interact with RNA. Its function is as follows. Acts as a primer for viral RNA replication and remains covalently bound to viral genomic RNA. VPg is uridylylated prior to priming replication into VPg-pUpU. The VPg-pUpU is then used as primer on the genomic RNA poly(A) by the RNA-dependent RNA polymerase to replicate the viral genome. Functionally, cysteine protease that generates mature viral proteins from the precursor polyprotein. In addition to its proteolytic activity, it binds to viral RNA, and thus influences viral genome replication. RNA and substrate bind cooperatively to the protease. Cleaves IKBKG/NEMO to impair innate immune signaling. Cleaves host PABPC1 which may participate in the switch of viral translation to RNA synthesis. In terms of biological role, interacts with the 3AB precursor and with RNA structures found at both the 5'- and 3'-termini of the viral genome. Disrupts TLR3 signaling by degrading the host adapter protein TICAM1/TRIF. RNA-directed RNA polymerase 3D-POL replicates genomic and antigenomic RNA by recognizing replications specific signals. In Cercopithecus hamlyni (Owl-faced monkey), this protein is Genome polyprotein.